Consider the following 98-residue polypeptide: Alpha-elicitin capsicein (98 aa).

3 cysteine pairs are disulfide-bonded: cysteine 3/cysteine 71, cysteine 27/cysteine 56, and cysteine 51/cysteine 95.

Belongs to the elicitin family.

The protein localises to the secreted. Functionally, induces local and distal defense responses (incompatible hypersensitive reaction) in plants from the solanaceae and cruciferae families. Elicits leaf necrosis and causes the accumulation of pathogenesis-related proteins. Might interact with the lipidic molecules of the plasma membrane. The chain is Alpha-elicitin capsicein from Phytophthora capsici.